We begin with the raw amino-acid sequence, 93 residues long: Acylphosphatase (93 aa).

In terms of domain architecture, Acylphosphatase-like spans 7–93; the sequence is RLTAWVHGRV…ADAIAGFTER (87 aa). Active-site residues include Arg-22 and Asn-40.

This sequence belongs to the acylphosphatase family.

The catalysed reaction is an acyl phosphate + H2O = a carboxylate + phosphate + H(+). The chain is Acylphosphatase (acyP) from Mycolicibacterium vanbaalenii (strain DSM 7251 / JCM 13017 / BCRC 16820 / KCTC 9966 / NRRL B-24157 / PYR-1) (Mycobacterium vanbaalenii).